The sequence spans 320 residues: Holliday junction branch migration complex subunit RuvB (320 aa).

A large ATPase domain (RuvB-L) region spans residues 1–172 (MTANVCLDES…FGIISRLEYY (172 aa)). Residues arginine 12, glycine 53, lysine 56, threonine 57, threonine 58, 119–121 (EDF), arginine 162, tyrosine 172, and arginine 209 each bind ATP. Threonine 57 is a Mg(2+) binding site. A small ATPAse domain (RuvB-S) region spans residues 173-243 (TPADLARIVA…LASEALGRME (71 aa)). Residues 246 to 320 (ESGLDQMDRK…KAYRHLNLLG (75 aa)) form a head domain (RuvB-H) region. Residues arginine 301 and arginine 306 each coordinate DNA.

Belongs to the RuvB family. In terms of assembly, homohexamer. Forms an RuvA(8)-RuvB(12)-Holliday junction (HJ) complex. HJ DNA is sandwiched between 2 RuvA tetramers; dsDNA enters through RuvA and exits via RuvB. An RuvB hexamer assembles on each DNA strand where it exits the tetramer. Each RuvB hexamer is contacted by two RuvA subunits (via domain III) on 2 adjacent RuvB subunits; this complex drives branch migration. In the full resolvosome a probable DNA-RuvA(4)-RuvB(12)-RuvC(2) complex forms which resolves the HJ.

The protein resides in the cytoplasm. The catalysed reaction is ATP + H2O = ADP + phosphate + H(+). The RuvA-RuvB-RuvC complex processes Holliday junction (HJ) DNA during genetic recombination and DNA repair, while the RuvA-RuvB complex plays an important role in the rescue of blocked DNA replication forks via replication fork reversal (RFR). RuvA specifically binds to HJ cruciform DNA, conferring on it an open structure. The RuvB hexamer acts as an ATP-dependent pump, pulling dsDNA into and through the RuvAB complex. RuvB forms 2 homohexamers on either side of HJ DNA bound by 1 or 2 RuvA tetramers; 4 subunits per hexamer contact DNA at a time. Coordinated motions by a converter formed by DNA-disengaged RuvB subunits stimulates ATP hydrolysis and nucleotide exchange. Immobilization of the converter enables RuvB to convert the ATP-contained energy into a lever motion, pulling 2 nucleotides of DNA out of the RuvA tetramer per ATP hydrolyzed, thus driving DNA branch migration. The RuvB motors rotate together with the DNA substrate, which together with the progressing nucleotide cycle form the mechanistic basis for DNA recombination by continuous HJ branch migration. Branch migration allows RuvC to scan DNA until it finds its consensus sequence, where it cleaves and resolves cruciform DNA. This chain is Holliday junction branch migration complex subunit RuvB, found in Nitratidesulfovibrio vulgaris (strain ATCC 29579 / DSM 644 / CCUG 34227 / NCIMB 8303 / VKM B-1760 / Hildenborough) (Desulfovibrio vulgaris).